Reading from the N-terminus, the 310-residue chain is tRNA-dihydrouridine(16) synthase (310 aa).

FMN contacts are provided by residues 7–9 and Gln-68; that span reads PMQ. The active-site Proton donor is the Cys-98. Residues Lys-139, 200-202, and 224-225 contribute to the FMN site; these read NGE and GR.

This sequence belongs to the Dus family. DusC subfamily. It depends on FMN as a cofactor.

The catalysed reaction is 5,6-dihydrouridine(16) in tRNA + NADP(+) = uridine(16) in tRNA + NADPH + H(+). The enzyme catalyses 5,6-dihydrouridine(16) in tRNA + NAD(+) = uridine(16) in tRNA + NADH + H(+). Functionally, catalyzes the synthesis of 5,6-dihydrouridine (D), a modified base found in the D-loop of most tRNAs, via the reduction of the C5-C6 double bond in target uridines. Specifically modifies U16 in tRNAs. The protein is tRNA-dihydrouridine(16) synthase of Haemophilus influenzae (strain ATCC 51907 / DSM 11121 / KW20 / Rd).